We begin with the raw amino-acid sequence, 348 residues long: Rhodopsin (348 aa).

M1 is modified (N-acetylmethionine). Residues 1-36 (MNGTEGPNFYVPFSNKTGVVRSPFEYPQYYLAEPWQ) lie on the Extracellular side of the membrane. N-linked (GlcNAc...) asparagine glycosylation is found at N2 and N15. The chain crosses the membrane as a helical span at residues 37–61 (FSMLAAYMFLLIVLGFPINFLTLYV). Topologically, residues 62–73 (TVQHKKLRTPLN) are cytoplasmic. The chain crosses the membrane as a helical span at residues 74–96 (YILLNLAVADLFMVFGGFTTTLY). Over 97-110 (TSLHGYFVFGPTGC) the chain is Extracellular. The cysteines at positions 110 and 187 are disulfide-linked. A helical transmembrane segment spans residues 111–133 (NLEGFFATLGGEIALWSLVVLAI). The 'Ionic lock' involved in activated form stabilization signature appears at 134–136 (ERY). The Cytoplasmic segment spans residues 134–152 (ERYVVVCKPMSNFRFGENH). A helical membrane pass occupies residues 153-173 (AIMGVAFTWVMALACAAPPLV). The Extracellular segment spans residues 174–202 (GWSRYIPEGMQCSCGIDYYTLKPEVNNES). E201 contacts Zn(2+). The chain crosses the membrane as a helical span at residues 203–224 (FVIYMFVVHFTIPMIVIFFCYG). Residues 225-252 (QLVFTVKEAAAQQQESATTQKAEKEVTR) lie on the Cytoplasmic side of the membrane. Residues 253–274 (MVIIMVIAFLICWVPYASVAFY) traverse the membrane as a helical segment. Residues 275 to 286 (IFTHQGSNFGPI) are Extracellular-facing. Q279 is a binding site for Zn(2+). Residues 287-308 (FMTLPAFFAKSSSIYNPVIYIM) traverse the membrane as a helical segment. The residue at position 296 (K296) is an N6-(retinylidene)lysine. The Cytoplasmic portion of the chain corresponds to 309–348 (MNKQFRNCMLTTLCCGKNPLGDDEASTTGSKTETSQVAPA). Residues C322 and C323 are each lipidated (S-palmitoyl cysteine). The interval 330 to 348 (DDEASTTGSKTETSQVAPA) is interaction with SAG. S334 is modified (phosphoserine). 2 positions are modified to phosphothreonine: T335 and T336. S338 is modified (phosphoserine). T340 and T342 each carry phosphothreonine. Residue S343 is modified to Phosphoserine.

The protein belongs to the G-protein coupled receptor 1 family. Opsin subfamily. In terms of assembly, homodimer. May form a complex composed of RHO, GRK1 and RCVRN in a Ca(2+)-dependent manner; RCVRN prevents the interaction between GRK1 and RHO. Interacts with GRK1. Interacts (phosphorylated form) with SAG. Interacts with GNAT1. Interacts with GNAT3. SAG and G-proteins compete for a common binding site. Interacts with PRCD; the interaction promotes PRCD stability. Forms a complex with ASAP1 and ARF4. Forms a complex with ASAP1, RAB11A, Rabin8/RAB3IP, ARF4 and RAB11FIP3; the complex regulates Golgi-to-cilia rhodopsin/RHO transport in photoreceptors. In terms of processing, phosphorylated on some or all of the serine and threonine residues present in the C-terminal region. Post-translationally, contains one covalently linked retinal chromophore. Upon light absorption, the covalently bound 11-cis-retinal is converted to all-trans-retinal. After hydrolysis of the Schiff base and release of the covalently bound all-trans-retinal, active rhodopsin is regenerated by binding of a fresh molecule of 11-cis-retinal.

It is found in the membrane. The protein localises to the cell projection. The protein resides in the cilium. Its subcellular location is the photoreceptor outer segment. Photoreceptor required for image-forming vision at low light intensity. Required for photoreceptor cell viability after birth. Light-induced isomerization of 11-cis to all-trans retinal triggers a conformational change that activates signaling via G-proteins. Subsequent receptor phosphorylation mediates displacement of the bound G-protein alpha subunit by the arrestin SAG and terminates signaling. The sequence is that of Rhodopsin (RHO) from Felis catus (Cat).